A 142-amino-acid polypeptide reads, in one-letter code: UPF0179 protein PYRAB06360 (142 aa).

Belongs to the UPF0179 family.

This is UPF0179 protein PYRAB06360 from Pyrococcus abyssi (strain GE5 / Orsay).